Reading from the N-terminus, the 301-residue chain is Phosphatidylglycerol--prolipoprotein diacylglyceryl transferase (301 aa).

3 consecutive transmembrane segments (helical) span residues 17 to 37, 59 to 79, and 97 to 117; these read LAVRWYGLMYLVAFIAAIVVG, MLFYGVLGTILGGRLGYVLFY, and GGMSFHGGFLGVTLAMVLFAY. Arg142 lines the a 1,2-diacyl-sn-glycero-3-phospho-(1'-sn-glycerol) pocket. 2 helical membrane passes run 230–250 and 265–285; these read MGAISAVFLIGYGLARFTVEF and LSMGQWLSLPMILVGIGLLVW.

It belongs to the Lgt family.

The protein resides in the cell inner membrane. The catalysed reaction is L-cysteinyl-[prolipoprotein] + a 1,2-diacyl-sn-glycero-3-phospho-(1'-sn-glycerol) = an S-1,2-diacyl-sn-glyceryl-L-cysteinyl-[prolipoprotein] + sn-glycerol 1-phosphate + H(+). Its pathway is protein modification; lipoprotein biosynthesis (diacylglyceryl transfer). Catalyzes the transfer of the diacylglyceryl group from phosphatidylglycerol to the sulfhydryl group of the N-terminal cysteine of a prolipoprotein, the first step in the formation of mature lipoproteins. This chain is Phosphatidylglycerol--prolipoprotein diacylglyceryl transferase, found in Paraburkholderia phytofirmans (strain DSM 17436 / LMG 22146 / PsJN) (Burkholderia phytofirmans).